We begin with the raw amino-acid sequence, 146 residues long: Hemoglobin subunit beta-1 (146 aa).

Positions 2 to 146 (GLTAHDRQLI…IADALGKGYH (145 aa)) constitute a Globin domain. Residues histidine 63 and histidine 92 each contribute to the heme b site.

This sequence belongs to the globin family. In terms of assembly, heterotetramer of two alpha chains and two beta chains. Red blood cells.

In terms of biological role, involved in oxygen transport from the lung to the various peripheral tissues. The sequence is that of Hemoglobin subunit beta-1 (hbb1) from Xenopus borealis (Kenyan clawed frog).